The chain runs to 64 residues: Probable cytochrome c oxidase subunit 5C-1 (64 aa).

A helical transmembrane segment spans residues 15-34; sequence SVVKELFIGLALGLAAGGLW.

The protein belongs to the cytochrome c oxidase subunit 5C family.

The protein resides in the mitochondrion inner membrane. Functionally, this protein is one of the nuclear-coded polypeptide chains of cytochrome c oxidase, the terminal oxidase in mitochondrial electron transport. The polypeptide is Probable cytochrome c oxidase subunit 5C-1 (Arabidopsis thaliana (Mouse-ear cress)).